Here is a 361-residue protein sequence, read N- to C-terminus: Methyltransferase LUC1 (361 aa).

Residues tyrosine 18, asparagine 66, aspartate 89, serine 126, and phenylalanine 127 each coordinate S-adenosyl-L-homocysteine. Residues glutamine 156 and phenylalanine 233 each contribute to the Mg(2+) site.

This sequence belongs to the methyltransferase superfamily. Type-7 methyltransferase family. The cofactor is Mg(2+).

The protein operates within mycotoxin biosynthesis. Methyltransferase; part of the gene cluster that mediates the biosynthesis of the mycotoxin lucilactaene and the lucilactaene-related compound NG-391 that act as cell cycle inhibitors with potent growth inhibitory activity against malarial parasites, moderate growth inhibitory activity against cancer cells, and no activity against bacteria and fungi. LUC1 performs the last step of the pathway and methylates the hydroxyl group of demethyllucilactaene at C-21 to yeald lucilactaene. The pathway begins with the hybrid PKS-NRPS synthetase LUC5 which is responsible for the condensation of one acetyl-coenzyme A (CoA) unit with six malonyl-CoA units and the amide linkage of the arising heptaketide and homoserine, subsequently releasing the first intermediate prelucilactaene B. Both the cytochrome P450 monooxygenase LUC2 and the hydrolase LUC6 function in parallel in modification of prelucilactaene B. LUC6 may catalyze the 2-pyrrolidone ring formation to form prelucilactaene C from prelucilactaene B, followed by C-15 hydroxylation by the same enzyme to give prelucilactaene D, which is then converted to prelucilactaene E by epoxidation, and finally to prelucilactaene F by cyclization. Prelucilactane D, prelucilactaene E, and prelucilactaene F can be converted to dihydrolucilactaene, NG391, and lucilactaene, respectively, via C-20 methyl group hydroxylation by the cytochrome P450 monooxygenase LUC2. However, LUC2, unlike FUS8 in fusarin C biosynthesis, is not enough for the full oxidation of the C-20 methyl group into carboxylic acid, which is a prerequisite for the final methylation step. The aldehyde dehydrogenase LUC3 is involved in the biosynthesis by further oxidation of the C-20 alcoholic analog prelucilactaene G into a carboxylic derivative. This unidentified carboxylic derivative may be converted to demethyllucilactaene. As the last step, the methyltransferase LUC1 methylates the hydroxyl group at C-21 of demethyllucilactaene to generate lucilactaene. The sequence is that of Methyltransferase LUC1 from Fusarium sp.